Consider the following 82-residue polypeptide: MSGSTGERPFSDIVTSIRYWVIHSVTIPSLFIAGWLFVSTGLAYDVFGTPRPNEYFTEERQELPLISDRYGALAQLDDLVPN.

Residues 21-35 (VIHSVTIPSLFIAGW) traverse the membrane as a helical segment. Position 23 (histidine 23) interacts with heme.

Belongs to the PsbE/PsbF family. Heterodimer of an alpha subunit and a beta subunit. PSII is composed of 1 copy each of membrane proteins PsbA, PsbB, PsbC, PsbD, PsbE, PsbF, PsbH, PsbI, PsbJ, PsbK, PsbL, PsbM, PsbT, PsbX, PsbY, PsbZ, Psb30/Ycf12, at least 3 peripheral proteins of the oxygen-evolving complex and a large number of cofactors. It forms dimeric complexes. Heme b serves as cofactor.

It is found in the plastid. It localises to the chloroplast thylakoid membrane. In terms of biological role, this b-type cytochrome is tightly associated with the reaction center of photosystem II (PSII). PSII is a light-driven water:plastoquinone oxidoreductase that uses light energy to abstract electrons from H(2)O, generating O(2) and a proton gradient subsequently used for ATP formation. It consists of a core antenna complex that captures photons, and an electron transfer chain that converts photonic excitation into a charge separation. This is Cytochrome b559 subunit alpha from Ostreococcus tauri.